We begin with the raw amino-acid sequence, 135 residues long: Ribosome-binding factor A (135 aa).

Belongs to the RbfA family. As to quaternary structure, monomer. Binds 30S ribosomal subunits, but not 50S ribosomal subunits or 70S ribosomes.

The protein localises to the cytoplasm. One of several proteins that assist in the late maturation steps of the functional core of the 30S ribosomal subunit. Associates with free 30S ribosomal subunits (but not with 30S subunits that are part of 70S ribosomes or polysomes). Required for efficient processing of 16S rRNA. May interact with the 5'-terminal helix region of 16S rRNA. This chain is Ribosome-binding factor A, found in Bartonella henselae (strain ATCC 49882 / DSM 28221 / CCUG 30454 / Houston 1) (Rochalimaea henselae).